Here is a 135-residue protein sequence, read N- to C-terminus: C-type lectin BPL (135 aa).

4 cysteine pairs are disulfide-bonded: cysteine 3/cysteine 14, cysteine 31/cysteine 131, cysteine 38/cysteine 133, and cysteine 106/cysteine 123. In terms of domain architecture, C-type lectin spans 10–132 (MNGLCYKIFN…CESKNAFLCQ (123 aa)). Ca(2+) contacts are provided by glutamine 96, aspartate 98, glutamate 104, and aspartate 120. Residues 96-98 (QPD) carry the Galactose-binding motif.

Belongs to the true venom lectin family. As to quaternary structure, homodimer; disulfide-linked. Expressed by the venom gland.

It localises to the secreted. Its function is as follows. Galactose-binding protein which recognizes specific carbohydrate structures and agglutinates a variety of animal cells by binding to cell-surface glycoproteins and glycolipids. Calcium-dependent lectin. Shows high hemagglutinating activity in the presence of human erythrocytes, which are agglutinated with a minimum hemagglutination concentration (MHC) of 2.5-0.35 ug/ml. Causes indirect nephrotoxicity. Causes reductions in perfusion pressures, renal vascular resistance, urinary flow, glomerular filtration rate, sodium, potassium and chloride tubular transport. Its effects may be caused by the release of inflammatory mediators. In Bothrops pirajai (Piraja's lancehead), this protein is C-type lectin BPL.